Here is a 634-residue protein sequence, read N- to C-terminus: tRNA uridine 5-carboxymethylaminomethyl modification enzyme MnmG (634 aa).

14–19 (GGGHAG) contacts FAD. 279-293 (GPRYCPSIEDKVVRF) contributes to the NAD(+) binding site.

Belongs to the MnmG family. In terms of assembly, homodimer. Heterotetramer of two MnmE and two MnmG subunits. The cofactor is FAD.

The protein localises to the cytoplasm. Functionally, NAD-binding protein involved in the addition of a carboxymethylaminomethyl (cmnm) group at the wobble position (U34) of certain tRNAs, forming tRNA-cmnm(5)s(2)U34. The protein is tRNA uridine 5-carboxymethylaminomethyl modification enzyme MnmG of Xanthomonas euvesicatoria pv. vesicatoria (strain 85-10) (Xanthomonas campestris pv. vesicatoria).